The sequence spans 346 residues: N-acetyl-gamma-glutamyl-phosphate reductase (346 aa).

The active site involves cysteine 154.

This sequence belongs to the NAGSA dehydrogenase family. Type 1 subfamily.

It localises to the cytoplasm. It carries out the reaction N-acetyl-L-glutamate 5-semialdehyde + phosphate + NADP(+) = N-acetyl-L-glutamyl 5-phosphate + NADPH + H(+). It functions in the pathway amino-acid biosynthesis; L-arginine biosynthesis; N(2)-acetyl-L-ornithine from L-glutamate: step 3/4. Functionally, catalyzes the NADPH-dependent reduction of N-acetyl-5-glutamyl phosphate to yield N-acetyl-L-glutamate 5-semialdehyde. The chain is N-acetyl-gamma-glutamyl-phosphate reductase from Rhodopirellula baltica (strain DSM 10527 / NCIMB 13988 / SH1).